Consider the following 3075-residue polypeptide: Laminin subunit alpha-1 (3075 aa).

The signal sequence occupies residues 1–17 (MRGGVLLVLLLCVAAQC). Residues 18–269 (RQRGLFPAIL…SIKDISVGGM (252 aa)) enclose the Laminin N-terminal domain. Disulfide bonds link Cys270/Cys279, Cys272/Cys290, Cys292/Cys301, Cys304/Cys324, Cys327/Cys336, Cys329/Cys361, Cys364/Cys373, Cys376/Cys394, Cys397/Cys409, Cys399/Cys427, Cys429/Cys438, Cys441/Cys451, Cys454/Cys467, Cys456/Cys471, Cys473/Cys482, and Cys485/Cys500. Laminin EGF-like domains lie at 270–326 (CICY…TCEA), 327–396 (CNCH…PCRP), 397–453 (CNCD…TCVS), and 454–502 (CGCN…GCSE). Residues 503–512 (CFCFGVSDVC) enclose the Laminin EGF-like 5; first part domain. Residues 516-708 (SWPVGQVNSM…DLVVAADVEH (193 aa)) enclose the Laminin IV type A 1 domain. The N-linked (GlcNAc...) asparagine glycan is linked to Asn665. The 33-residue stretch at 709 to 741 (CECPQGYTGTSCESCLSGYYRVDGILFGGICQP) folds into the Laminin EGF-like 5; second part domain. Disulfide bonds link Cys742-Cys751, Cys744-Cys757, Cys760-Cys769, Cys772-Cys788, Cys791-Cys806, Cys793-Cys816, Cys819-Cys828, Cys831-Cys846, Cys849-Cys863, Cys851-Cys870, Cys873-Cys882, Cys885-Cys899, Cys902-Cys914, Cys904-Cys921, Cys923-Cys932, Cys935-Cys948, Cys951-Cys963, Cys953-Cys969, Cys971-Cys980, Cys983-Cys995, Cys998-Cys1007, Cys1000-Cys1014, Cys1016-Cys1025, Cys1028-Cys1041, Cys1044-Cys1056, Cys1046-Cys1063, Cys1065-Cys1074, Cys1077-Cys1087, Cys1090-Cys1102, Cys1092-Cys1118, Cys1120-Cys1129, and Cys1132-Cys1147. Laminin EGF-like domains lie at 742–790 (CECH…DCQP), 791–848 (CACP…SCVP), 849–901 (CDCS…NCRA), 902–950 (CECH…GCRP), 951–997 (CNCS…SCTP), 998–1043 (CDCP…GCQA), 1044–1089 (CNCS…DCVP), and 1090–1149 (CDCD…GCSP). The Laminin EGF-like 14; first part domain occupies 1150 to 1159 (CFCSGLSHLC). One can recognise a Laminin IV type A 2 domain in the interval 1170–1361 (VTLGSDQPLL…EEEVASLLEN (192 aa)). Residues 1362–1402 (CVCPPGTVGFSCQDCAPGYHRGKLPAGSDRGPRPLVAPCVP) enclose the Laminin EGF-like 14; second part domain. 12 disulfide bridges follow: Cys1403/Cys1412, Cys1405/Cys1419, Cys1422/Cys1431, Cys1434/Cys1449, Cys1452/Cys1466, Cys1454/Cys1476, Cys1479/Cys1488, Cys1491/Cys1506, Cys1509/Cys1521, Cys1511/Cys1528, Cys1530/Cys1539, and Cys1542/Cys1553. 3 Laminin EGF-like domains span residues 1403–1451 (CSCN…DCAL), 1452–1508 (CACP…SCQK), and 1509–1555 (CDCN…DCVS). The interval 1556 to 2116 (CDDECVGVLL…SQARKQAASI (561 aa)) is domain II and I. Asn1579, Asn1689, Asn1717, Asn2047, and Asn2243 each carry an N-linked (GlcNAc...) asparagine glycan. A coiled-coil region spans residues 1706–1783 (MQIRDFTQLH…KMQESNHLLL (78 aa)). Laminin G-like domains are found at residues 2117-2297 (KVAV…CRGC), 2305-2481 (DPSF…RKGC), 2486-2673 (IRSV…LDTC), 2713-2885 (AHQF…VNRC), and 2890-3070 (QEGT…LHSC). 2 cysteine pairs are disulfide-bonded: Cys2271/Cys2297 and Cys2457/Cys2481. Residues 2534–2536 (RGD) carry the Cell attachment site motif. Cystine bridges form between Cys2646–Cys2673, Cys2860–Cys2885, and Cys3039–Cys3070.

Laminin is a complex glycoprotein, consisting of three different polypeptide chains (alpha, beta, gamma), which are bound to each other by disulfide bonds into a cross-shaped molecule comprising one long and three short arms with globules at each end. Alpha-1 is a subunit of laminin-1 (laminin-111 or EHS laminin) and laminin-3 (laminin-121 or S-laminin). In terms of processing, tyrosine phosphorylated by PKDCC/VLK.

Its subcellular location is the secreted. The protein localises to the extracellular space. The protein resides in the extracellular matrix. It localises to the basement membrane. Binding to cells via a high affinity receptor, laminin is thought to mediate the attachment, migration and organization of cells into tissues during embryonic development by interacting with other extracellular matrix components. The polypeptide is Laminin subunit alpha-1 (LAMA1) (Homo sapiens (Human)).